Consider the following 326-residue polypeptide: Hairy/enhancer-of-split related with YRPW motif-like protein (326 aa).

Residues 1-56 form a disordered region; the sequence is MKRPRAPSGSDGESDGPIDVGQENDLSQMARPLTTPSPSQMQARKKRRGIIEKRRR. The segment at 42-111 is transcriptional repression and interaction with NCOR1 and SIN3A; that stretch reads QARKKRRGII…GGTGFFDARA (70 aa). The 56-residue stretch at 43–98 folds into the bHLH domain; sequence ARKKRRGIIEKRRRDRINSSLSELRRLVPTAFEKQGSSKLEKAEVLQMTVDHLKML. The Orange domain maps to 116–153; it reads FRSIGFRECLTEVIRYLGVLEGPSSHADPVRIRLLSHL. 2 disordered regions span residues 223 to 260 and 272 to 306; these read HRPA…PPPT and PIPP…PTGR. Positions 292-305 are enriched in low complexity; the sequence is SGSISSPCPSGPTG.

The protein belongs to the HEY family. In terms of assembly, interacts with HES1, HDAC1, NCOR1 and SIN3A. Self-associates. Interacts with GATA4, GATA6, HEY1 and HEY2. In terms of tissue distribution, expressed in heart and at lower levels in brain, lung, muscle, ovary and testis.

The protein localises to the nucleus. Its function is as follows. Transcriptional repressor which binds preferentially to the canonical E box sequence 5'-CACGTG-3'. Downstream effector of Notch signaling required for cardiovascular development. Specifically required for the Notch-induced endocardial epithelial to mesenchymal transition, which is itself criticial for cardiac valve and septum development. Represses transcription by the cardiac transcriptional activators GATA4 and GATA6. This Mus musculus (Mouse) protein is Hairy/enhancer-of-split related with YRPW motif-like protein (Heyl).